Consider the following 236-residue polypeptide: Sugar fermentation stimulation protein homolog (236 aa).

This sequence belongs to the SfsA family.

The sequence is that of Sugar fermentation stimulation protein homolog from Proteus mirabilis (strain HI4320).